The following is a 530-amino-acid chain: Glucose-6-phosphate isomerase (530 aa).

Glutamate 322 serves as the catalytic Proton donor. Residues histidine 351 and lysine 455 contribute to the active site.

Belongs to the GPI family.

It localises to the cytoplasm. It catalyses the reaction alpha-D-glucose 6-phosphate = beta-D-fructose 6-phosphate. Its pathway is carbohydrate biosynthesis; gluconeogenesis. The protein operates within carbohydrate degradation; glycolysis; D-glyceraldehyde 3-phosphate and glycerone phosphate from D-glucose: step 2/4. In terms of biological role, catalyzes the reversible isomerization of glucose-6-phosphate to fructose-6-phosphate. The polypeptide is Glucose-6-phosphate isomerase (Geobacter sp. (strain M21)).